We begin with the raw amino-acid sequence, 139 residues long: D-ribose pyranase (139 aa).

The Proton donor role is filled by histidine 20. Substrate is bound by residues aspartate 28, histidine 106, and 128 to 130 (YAN).

Belongs to the RbsD / FucU family. RbsD subfamily. In terms of assembly, homodecamer.

It is found in the cytoplasm. It carries out the reaction beta-D-ribopyranose = beta-D-ribofuranose. The protein operates within carbohydrate metabolism; D-ribose degradation; D-ribose 5-phosphate from beta-D-ribopyranose: step 1/2. Catalyzes the interconversion of beta-pyran and beta-furan forms of D-ribose. In Salmonella typhi, this protein is D-ribose pyranase.